Consider the following 331-residue polypeptide: GTP-binding protein RHO5 (331 aa).

10–17 lines the GTP pocket; the sequence is GDGAVGKT. A disordered region spans residues 51–76; sequence ASSPLELDNGNDKRGSLSSASSSPST. Residues 66–75 are compositionally biased toward low complexity; sequence SLSSASSSPS. GTP contacts are provided by residues 87–91 and 156–159; these read DTAGQ and TKSD. Phosphoserine occurs at positions 223 and 228. Residues threonine 232 and threonine 244 each carry the phosphothreonine modification. The disordered stretch occupies residues 239–331; that stretch reads TATTNTNGDK…KKKKSKCVIL (93 aa). The segment covering 258–273 has biased composition (polar residues); sequence HHNNSTDSTLPKGSLQ. A Glycyl lysine isopeptide (Lys-Gly) (interchain with G-Cter in ubiquitin) cross-link involves residue lysine 276. The segment covering 287–297 has biased composition (basic and acidic residues); that stretch reads GQKDKIHEQSK. Positions 308–331 are enriched in basic residues; sequence HHNKQAKPKTRNDKKKKKSKCVIL. At cysteine 328 the chain carries Cysteine methyl ester. The S-geranylgeranyl cysteine moiety is linked to residue cysteine 328. Residues 329–331 constitute a propeptide, removed in mature form; sequence VIL.

This sequence belongs to the small GTPase superfamily. Rho family. In terms of assembly, interacts with RGD2.

Its subcellular location is the membrane. The protein localises to the mitochondrion. Small GTPase that negatively regulates a MAP kinase branch, downstream of SLT2, of the PKC1-mediated signal transduction pathway. With its specific guanine nucleotide exchange factor (GEF), the heterodimeric complex DCK1/LMO1, relocates to mitochondria upon oxidative stress and triggers cell death. The DCK1/LMO1/RHO5 signaling module that mediates mitochondrial turnover under nitrogen starvation conditions via mitophagy. The DCK1/LMO1/RHO5 signaling module also plays a role in cell wall integrity signaling. The protein is GTP-binding protein RHO5 of Saccharomyces cerevisiae (strain ATCC 204508 / S288c) (Baker's yeast).